Here is a 618-residue protein sequence, read N- to C-terminus: Dihydroxy-acid dehydratase (618 aa).

D81 serves as a coordination point for Mg(2+). Position 122 (C122) interacts with [2Fe-2S] cluster. Residues D123 and K124 each contribute to the Mg(2+) site. At K124 the chain carries N6-carboxylysine. C195 contributes to the [2Fe-2S] cluster binding site. Residue E491 participates in Mg(2+) binding. S517 acts as the Proton acceptor in catalysis.

This sequence belongs to the IlvD/Edd family. Homodimer. Requires [2Fe-2S] cluster as cofactor. Mg(2+) is required as a cofactor.

The catalysed reaction is (2R)-2,3-dihydroxy-3-methylbutanoate = 3-methyl-2-oxobutanoate + H2O. It catalyses the reaction (2R,3R)-2,3-dihydroxy-3-methylpentanoate = (S)-3-methyl-2-oxopentanoate + H2O. It functions in the pathway amino-acid biosynthesis; L-isoleucine biosynthesis; L-isoleucine from 2-oxobutanoate: step 3/4. It participates in amino-acid biosynthesis; L-valine biosynthesis; L-valine from pyruvate: step 3/4. Functionally, functions in the biosynthesis of branched-chain amino acids. Catalyzes the dehydration of (2R,3R)-2,3-dihydroxy-3-methylpentanoate (2,3-dihydroxy-3-methylvalerate) into 2-oxo-3-methylpentanoate (2-oxo-3-methylvalerate) and of (2R)-2,3-dihydroxy-3-methylbutanoate (2,3-dihydroxyisovalerate) into 2-oxo-3-methylbutanoate (2-oxoisovalerate), the penultimate precursor to L-isoleucine and L-valine, respectively. The chain is Dihydroxy-acid dehydratase from Rhodopseudomonas palustris (strain TIE-1).